Consider the following 130-residue polypeptide: DNA-directed RNA polymerase subunit omega (130 aa).

Disordered stretches follow at residues 79-98 and 108-130; these read EPESDTVPLIGSAGASVDAD and TEEELLKGLEGLAPPEEQPEEDE.

Belongs to the RNA polymerase subunit omega family. In terms of assembly, the RNAP catalytic core consists of 2 alpha, 1 beta, 1 beta' and 1 omega subunit. When a sigma factor is associated with the core the holoenzyme is formed, which can initiate transcription.

The catalysed reaction is RNA(n) + a ribonucleoside 5'-triphosphate = RNA(n+1) + diphosphate. Its function is as follows. Promotes RNA polymerase assembly. Latches the N- and C-terminal regions of the beta' subunit thereby facilitating its interaction with the beta and alpha subunits. This Nitrobacter winogradskyi (strain ATCC 25391 / DSM 10237 / CIP 104748 / NCIMB 11846 / Nb-255) protein is DNA-directed RNA polymerase subunit omega.